The chain runs to 207 residues: MTSRKKVLLKVIILGDSGVGKTSLMNQYVNKKFSNQYKATIGADFLTKEVMVDDRLVTMQIWDTAGQERFQSLGVAFYRGADCCVLVFDVTAPNTFKTLDSWRDEFLIQASPRDPENFPFVVLGNKIDLENRQVATKRAQAWCYSKNNIPYFETSAKEAINVEQAFQTIARNALKQETEVELYNEFPEPIKLDKNDRAKTSAESCSC.

Threonine 2 is modified (N-acetylthreonine). Serine 17, glycine 18, valine 19, glycine 20, lysine 21, threonine 22, serine 23, serine 34, asparagine 35, tyrosine 37, and threonine 40 together coordinate GTP. Threonine 22 contacts Mg(2+). Positions 28-41 match the Switch 1 motif; the sequence is YVNKKFSNQYKATI. Threonine 40 and aspartate 63 together coordinate Mg(2+). Glycine 66 contributes to the GTP binding site. Residues 67 to 82 carry the Switch 2 motif; the sequence is QERFQSLGVAFYRGAD. At serine 72 the chain carries Phosphoserine. 5 residues coordinate GTP: asparagine 125, lysine 126, aspartate 128, alanine 156, and lysine 157. Glycyl lysine isopeptide (Lys-Gly) (interchain with G-Cter in ubiquitin) cross-links involve residues lysine 191 and lysine 194. Residues cysteine 205 and cysteine 207 are each lipidated (S-geranylgeranyl cysteine). Cysteine methyl ester is present on cysteine 207.

Belongs to the small GTPase superfamily. Rab family. In terms of assembly, interacts with NTRK1/TRKA. Interacts with RILP. Interacts with PSMA7. Interacts with RNF115. Interacts with FYCO1. Interacts with the PIK3C3/VPS34-PIK3R4 complex. The GTP-bound form interacts with OSBPL1A. The GTP-bound form interacts with RAC1. Interacts with CLN3. Interacts with CHM, the substrate-binding subunit of the Rab geranylgeranyltransferase complex. Interacts with C9orf72. Does not interact with HPS4 and the BLOC-3 complex (heterodimer of HPS1 and HPS4). Interacts with CLN5. Interacts with PLEKHM1 (via N- and C-terminus). Interacts with PRPH; the interaction is direct. Interacts with VPS13A. The GDP-bound form interacts with RIMOC1. Interacts with the MON1A-CCZ1B complex and this interaction is enhanced in the presence of RIMOC1. Interacts with VPS39 and VPS41. Forms a ternary complex with LAMP2 and RUFY4; the interaction with LAMP2 is mediated by RUFY4 (via RUN and coiled coil domains). The cofactor is Mg(2+). Post-translationally, deubiquitination at Lys-191 and Lys-194 by USP32. In terms of processing, phosphorylated at Ser-72 by LRRK1; phosphorylation is dependent on protein kinase C (PKC) activation of LRRK1. Prenylated. Prenylation is required for association with cellular membranes.

Its subcellular location is the cytoplasmic vesicle. It localises to the phagosome membrane. The protein resides in the late endosome membrane. The protein localises to the lysosome membrane. It is found in the melanosome membrane. Its subcellular location is the autophagosome membrane. It localises to the lipid droplet. The protein resides in the endosome membrane. The protein localises to the mitochondrion membrane. It carries out the reaction GTP + H2O = GDP + phosphate + H(+). Regulated by guanine nucleotide exchange factors (GEFs) which promote the exchange of bound GDP for free GTP. Regulated by GTPase activating proteins (GAPs) which increase the GTP hydrolysis activity. Inhibited by GDP dissociation inhibitors (GDIs). The small GTPases Rab are key regulators of intracellular membrane trafficking, from the formation of transport vesicles to their fusion with membranes. Rabs cycle between an inactive GDP-bound form and an active GTP-bound form that is able to recruit to membranes different sets of downstream effectors directly responsible for vesicle formation, movement, tethering and fusion. In its active state, RAB7A binds to a variety of effector proteins playing a key role in the regulation of endo-lysosomal trafficking. Governs early-to-late endosomal maturation, microtubule minus-end as well as plus-end directed endosomal migration and positioning, and endosome-lysosome transport through different protein-protein interaction cascades. Also plays a central role in growth-factor-mediated cell signaling, nutrient-transporter-mediated nutrient uptake, neurotrophin transport in the axons of neurons and lipid metabolism. Also involved in regulation of some specialized endosomal membrane trafficking, such as maturation of melanosomes, pathogen-induced phagosomes (or vacuoles) and autophagosomes. Plays a role in the maturation and acidification of phagosomes that engulf pathogens, such as S.aureus and Mycobacteria. Plays a role in the fusion of phagosomes with lysosomes. In concert with RAC1, plays a role in regulating the formation of RBs (ruffled borders) in osteoclasts. Controls the endosomal trafficking and neurite outgrowth signaling of NTRK1/TRKA. Regulates the endocytic trafficking of the EGF-EGFR complex by regulating its lysosomal degradation. Involved in the ADRB2-stimulated lipolysis through lipophagy, a cytosolic lipase-independent autophagic pathway. Required for the exosomal release of SDCBP, CD63 and syndecan. Required for vesicular trafficking and cell surface expression of ACE2. May play a role in PRPH neuronal intermediate filament assembly. The protein is Ras-related protein Rab-7a (RAB7A) of Canis lupus familiaris (Dog).